Consider the following 190-residue polypeptide: MGIKEDNWIRKMAIEEGMIEPFADSQVKLHPETGEKLISYGLSSYGYDLRISREFKVFTNVYNSLVDPKCFTEDALISIVDDVCIIPPNSFALARSVEYFRIPRNVLTVCIGKSTYARCGLIVNVTPFEPEWEGYVTIEISNTTPLPAKVYANEGIAQVLFFEGDATCDVSYAERQGKYQKQQGITIPFV.

DCTP is bound at residue 113 to 118 (KSTYAR). Glu-139 (proton donor/acceptor) is an active-site residue. Gln-158, Tyr-172, Lys-181, and Gln-182 together coordinate dCTP.

Belongs to the dCTP deaminase family. Homotrimer.

The catalysed reaction is dCTP + H2O + H(+) = dUTP + NH4(+). It participates in pyrimidine metabolism; dUMP biosynthesis; dUMP from dCTP (dUTP route): step 1/2. Catalyzes the deamination of dCTP to dUTP. This chain is dCTP deaminase, found in Chlamydia trachomatis serovar A (strain ATCC VR-571B / DSM 19440 / HAR-13).